Here is a 181-residue protein sequence, read N- to C-terminus: Proteinase inhibitor A (181 aa).

An N-terminal signal peptide occupies residues 1-24; sequence MAASNALLLISGVLLISLAVLCHG. 3 cysteine pairs are disulfide-bonded: Cys-67–Cys-113, Cys-134–Cys-143, and Cys-136–Cys-139.

Belongs to the protease inhibitor I3 (leguminous Kunitz-type inhibitor) family.

The protein resides in the secreted. Functionally, possesses two reactive sites. Inhibits an equimolar amount of trypsin and chymotrypsin simultaneously, and inhibits kallikrein weakly. The polypeptide is Proteinase inhibitor A (Sagittaria sagittifolia (Arrowhead)).